Reading from the N-terminus, the 414-residue chain is 2,3-diketo-5-methylthiopentyl-1-phosphate enolase (414 aa).

K99 serves as the catalytic Proton acceptor. Substrate-binding positions include K148, 174 to 177 (KDDE), H265, G338, and 360 to 361 (GG). Positions 174, 176, and 177 each coordinate Mg(2+). K174 is subject to N6-carboxylysine.

It belongs to the RuBisCO large chain family. Type IV subfamily. Homodimer. It depends on Mg(2+) as a cofactor.

It carries out the reaction 5-methylsulfanyl-2,3-dioxopentyl phosphate = 2-hydroxy-5-methylsulfanyl-3-oxopent-1-enyl phosphate. It participates in amino-acid biosynthesis; L-methionine biosynthesis via salvage pathway; L-methionine from S-methyl-5-thio-alpha-D-ribose 1-phosphate: step 3/6. Catalyzes the enolization of 2,3-diketo-5-methylthiopentyl-1-phosphate (DK-MTP-1-P) into 2-hydroxy-3-keto-5-methylthiopentenyl-1-phosphate (HK-MTPenyl-1-P). This is 2,3-diketo-5-methylthiopentyl-1-phosphate enolase from Bacillus cereus (strain ZK / E33L).